A 927-amino-acid polypeptide reads, in one-letter code: Disks large homolog 1 (927 aa).

The L27 domain occupies 4–64; it reads RKQDTQRALH…FYEVTLLDNP (61 aa). Phosphothreonine is present on threonine 115. Serine 122, serine 138, and serine 158 each carry phosphoserine. The interval 162–212 is interaction with SH3 domains; the sequence is PTEAVPPSSPTVPVIPVLPVPAENTVILPTIPQANPPPVLVNTDSLETSTY. Residues 224 to 546 are required for interaction with MARCHF2; the sequence is EITLERGNSG…QAVTIVAQYR (323 aa). PDZ domains are found at residues 230-317, 325-412, and 474-555; these read GNSG…SEKI, GPKG…YMND, and TGLG…RFEA. Serine 232 is modified (phosphoserine). A Phosphotyrosine modification is found at tyrosine 399. 9 positions are modified to phosphoserine: serine 568, serine 573, serine 575, serine 579, serine 598, serine 619, serine 707, serine 710, and serine 857. The SH3 domain occupies 581–651; sequence KRSLYVRALF…PSKRRVEKKE (71 aa). One can recognise a Guanylate kinase-like domain in the interval 683-858; the sequence is RKFPFYKNKD…ISIFIKPKSM (176 aa). The disordered stretch occupies residues 691-719; the sequence is KDQSEQETSDADQHITSNASDSESSYRGQ. The span at 704 to 717 shows a compositional bias: polar residues; sequence HITSNASDSESSYR.

The protein belongs to the MAGUK family. As to quaternary structure, homotetramer. Interacts (via guanylate kinase-like domain) with DLGAP1, DLGAP2, DLGAP3, DLGAP4 and MAP1A. Interacts (via guanylate kinase-like domain) with KIF13B. May interact with HTR2A. Interacts (via PDZ domains) with GRIA1. Interacts (via PDZ domains) with GRIN2A. Interacts (via PDZ domains) with KCND2 and KCND3. Interacts (via PDZ domains) with KCNA1, KCNA2, KCNA3 and KCNA4. Interacts (via PDZ domains) with ADGRA3. Interacts with KCNF1. Interacts with CAMK2. Interacts with cytoskeleton-associated protein EPB41. Interacts with cytoskeleton-associated protein EZR. Found in a complex with KCNA5 and CAV3. Found in a complex with APC and CTNNB1. Interacts (via PDZ domains) with APC. Interacts with CDH1 through binding to PIK3R1. Forms multiprotein complexes with CASK, LIN7A, LIN7B, LIN7C, APBA1, and KCNJ12. Interacts with TOPK. Forms a tripartite complex composed of DLG1, MPP7 and LIN7 (LIN7A or LIN7C). May interact with TJAP1. Interacts with PTEN. Interacts with FRMPD4 (via C-terminus). Interacts with LRFN1, LRFN2 and LRFN4. Interacts with SFPQ. Interacts (via PDZ domains) with ADGRA2 (via PDZ-binding motif). Interacts with ADAM10; this interaction recruits ADAM10 to the cell membrane during long-term depression in hippocampal neurons. Interacts with DGKI (via PDZ-binding motif). Interacts (via PDZ domains) with MARCHF2 (via PDZ domain); the interaction leads to DLG1 ubiqtuitination and degradation. Interacts (via N-terminus) with MPP3; this interaction connects CADM1 with DLG1 and links CADM1 with the regulatory subunit of phosphoinositide-3-kinase (PI3K) by forming a multiprotein complex and participates in cell spreading. Phosphorylated by MAPK12. Phosphorylation of Ser-232 regulates association with GRIN2A. In terms of processing, ubiquitinated; by MARCHF2 which results in its degradation.

Its subcellular location is the cell membrane. The protein resides in the basolateral cell membrane. It localises to the endoplasmic reticulum membrane. It is found in the postsynaptic density. The protein localises to the synapse. Its subcellular location is the sarcolemma. The protein resides in the apical cell membrane. It localises to the cell junction. It is found in the cytoplasm. Essential multidomain scaffolding protein required for normal development. Recruits channels, receptors and signaling molecules to discrete plasma membrane domains in polarized cells. Promotes epithelial cell layer barrier function via maintaining cell-cell adhesion. May also play a role in adherens junction assembly, signal transduction, cell proliferation, synaptogenesis and lymphocyte activation. Regulates the excitability of cardiac myocytes by modulating the functional expression of Kv4 channels. Functional regulator of Kv1.5 channel. During long-term depression in hippocampal neurons, it recruits ADAM10 to the plasma membrane. The sequence is that of Disks large homolog 1 (DLG1) from Canis lupus familiaris (Dog).